Here is a 274-residue protein sequence, read N- to C-terminus: Formamidopyrimidine-DNA glycosylase (274 aa).

Proline 2 (schiff-base intermediate with DNA) is an active-site residue. Glutamate 3 acts as the Proton donor in catalysis. Lysine 58 (proton donor; for beta-elimination activity) is an active-site residue. DNA contacts are provided by histidine 91, arginine 110, and lysine 152. The segment at 237 to 271 (KVYGRKNLPCLVCENKIETVVIAGRHSAFCPHCQP) adopts an FPG-type zinc-finger fold. Arginine 261 acts as the Proton donor; for delta-elimination activity in catalysis.

Belongs to the FPG family. Monomer. Zn(2+) serves as cofactor.

It catalyses the reaction Hydrolysis of DNA containing ring-opened 7-methylguanine residues, releasing 2,6-diamino-4-hydroxy-5-(N-methyl)formamidopyrimidine.. It carries out the reaction 2'-deoxyribonucleotide-(2'-deoxyribose 5'-phosphate)-2'-deoxyribonucleotide-DNA = a 3'-end 2'-deoxyribonucleotide-(2,3-dehydro-2,3-deoxyribose 5'-phosphate)-DNA + a 5'-end 5'-phospho-2'-deoxyribonucleoside-DNA + H(+). Functionally, involved in base excision repair of DNA damaged by oxidation or by mutagenic agents. Acts as a DNA glycosylase that recognizes and removes damaged bases. Has a preference for oxidized purines, such as 7,8-dihydro-8-oxoguanine (8-oxoG). Has AP (apurinic/apyrimidinic) lyase activity and introduces nicks in the DNA strand. Cleaves the DNA backbone by beta-delta elimination to generate a single-strand break at the site of the removed base with both 3'- and 5'-phosphates. This is Formamidopyrimidine-DNA glycosylase from Legionella pneumophila subsp. pneumophila (strain Philadelphia 1 / ATCC 33152 / DSM 7513).